A 503-amino-acid polypeptide reads, in one-letter code: MEEFQGYLELYRSQQHDFLYPLIFREYIYALAHDRGLNRSVLLDNVGYDKKSSLLIIKRLISRMYQQNHFLISVNDSNQNKFFGYNKNLYSQIISEGFAVIVEIPFSLRLVSSLKETETVKSYNLRSIHSIFPFFEDKFPHLNYASDVLIPYPIHLEILVQTLRYCVKDPSSLHLLRLFLHEYYNWNTLITPKKSIFAKSNQRLFLLLYNSYVCEYESILLFLRNQSNHLRLTSFGILFERIRFYEKIKYPVEEVFANDFPATLWFFKDPFIQYVRYQGKSILASKDTPLLMNKWKYYLVHFWQCHFYVWFQPGRIHINQLSKHSFDFLGYLSSIRPNISVVRSQLLENSFLMDNAMKKLDTLFPIIPMIGSLAKVKFCNTSGHPISKSSWADSSDSDIIDRFVRIGGNLSHYYSGSSKKKSLYRIKYILRLSCVKTLARKHKSTVRTFLKRLGPKLLDEFFTEEEQIFSLLFPRTSSTLKRFYRGRIWYLDILCINDLVNHE.

The protein belongs to the intron maturase 2 family. MatK subfamily.

It is found in the plastid. The protein resides in the chloroplast. In terms of biological role, usually encoded in the trnK tRNA gene intron. Probably assists in splicing its own and other chloroplast group II introns. In Rosa rugosa (Rugosa rose), this protein is Maturase K.